Consider the following 230-residue polypeptide: Acyl-coenzyme A thioesterase THEM4 (230 aa).

Residues 1–27 (MLRSCAMRLRTLGATPARRPEATRRLF) constitute a mitochondrion transit peptide. 2 positions are modified to phosphoserine: serine 28 and serine 29. 2 positions are modified to N6-succinyllysine: lysine 46 and lysine 57. Position 65 is an N6-acetyllysine (lysine 65). Residues lysine 89 and lysine 98 each carry the N6-succinyllysine modification. Aspartate 152 functions as the Proton donor/acceptor in the catalytic mechanism. Residues lysine 175 and 196-197 (RK) each bind substrate. Lysine 197 carries the post-translational modification N6-succinyllysine.

The protein belongs to the THEM4/THEM5 thioesterase family. In terms of assembly, homodimer and homotetramer. Interacts with AKT1 in the cytosol. Post-translationally, phosphorylated.

It localises to the cell membrane. Its subcellular location is the cell projection. The protein localises to the ruffle membrane. It is found in the cytoplasm. The protein resides in the mitochondrion. It localises to the mitochondrion inner membrane. Its subcellular location is the mitochondrion intermembrane space. It carries out the reaction hexadecanoyl-CoA + H2O = hexadecanoate + CoA + H(+). It catalyses the reaction octanoyl-CoA + H2O = octanoate + CoA + H(+). The catalysed reaction is decanoyl-CoA + H2O = decanoate + CoA + H(+). The enzyme catalyses dodecanoyl-CoA + H2O = dodecanoate + CoA + H(+). It carries out the reaction tetradecanoyl-CoA + H2O = tetradecanoate + CoA + H(+). It catalyses the reaction (9Z)-octadecenoyl-CoA + H2O = (9Z)-octadecenoate + CoA + H(+). The catalysed reaction is (5Z,8Z,11Z,14Z)-eicosatetraenoyl-CoA + H2O = (5Z,8Z,11Z,14Z)-eicosatetraenoate + CoA + H(+). In terms of biological role, has acyl-CoA thioesterase activity towards medium and long-chain (C14 to C18) fatty acyl-CoA substrates, and probably plays a role in mitochondrial fatty acid metabolism. Plays a role in the apoptotic process, possibly via its regulation of AKT1 activity. The polypeptide is Acyl-coenzyme A thioesterase THEM4 (Them4) (Rattus norvegicus (Rat)).